We begin with the raw amino-acid sequence, 414 residues long: uncharacterized protein (414 aa).

A signal peptide spans 1-16 (MRVILLLAFLISLTEC). Positions 20-59 (SEDLALYDLVEEVGVNFYEWFDIPRDASSNQVKKAYRKLT) constitute a Myb-like 1 domain. In terms of domain architecture, J spans 35 to 99 (NFYEWFDIPR…ELREKYDNVL (65 aa)). Residues 125–145 (ILVLLFIGTIAHYLMMWAAYF) traverse the membrane as a helical segment. Residues 211–234 (MTPKEVEPEEPTEEELAQQRRQQR) are disordered. The segment covering 217–226 (EPEEPTEEEL) has biased composition (acidic residues). In terms of domain architecture, Myb-like 2 spans 274-320 (AQKQSGATWTPDELASLVRLSTEKYPAGTPNRWEQMGRVLNRSAEDV). The SANT domain occupies 352–407 (KSEDDWSQAEQKAFETALQKYPKGTDERWERISEEIGSKTKKQVMVRFKQLAEMIR).

It localises to the nucleus membrane. This is an uncharacterized protein from Caenorhabditis elegans.